The chain runs to 529 residues: Bifunctional purine biosynthesis protein PurH (529 aa).

The MGS-like domain maps to 1 to 148 (MTNRNVIKNV…KNYKNVLVVT (148 aa)).

It belongs to the PurH family.

It carries out the reaction (6R)-10-formyltetrahydrofolate + 5-amino-1-(5-phospho-beta-D-ribosyl)imidazole-4-carboxamide = 5-formamido-1-(5-phospho-D-ribosyl)imidazole-4-carboxamide + (6S)-5,6,7,8-tetrahydrofolate. It catalyses the reaction IMP + H2O = 5-formamido-1-(5-phospho-D-ribosyl)imidazole-4-carboxamide. It participates in purine metabolism; IMP biosynthesis via de novo pathway; 5-formamido-1-(5-phospho-D-ribosyl)imidazole-4-carboxamide from 5-amino-1-(5-phospho-D-ribosyl)imidazole-4-carboxamide (10-formyl THF route): step 1/1. It functions in the pathway purine metabolism; IMP biosynthesis via de novo pathway; IMP from 5-formamido-1-(5-phospho-D-ribosyl)imidazole-4-carboxamide: step 1/1. In Buchnera aphidicola subsp. Baizongia pistaciae (strain Bp), this protein is Bifunctional purine biosynthesis protein PurH.